A 426-amino-acid polypeptide reads, in one-letter code: Putative acid phosphatase 1 (426 aa).

The signal sequence occupies residues 1 to 18 (MRVLFYVSILVIIASVHT). Topologically, residues 19–388 (QLISVHVIFR…SEWVMTPLSW (370 aa)) are extracellular. Catalysis depends on His-29, which acts as the Nucleophile. N-linked (GlcNAc...) asparagine glycans are attached at residues Asn-37 and Asn-145. Residues Cys-133 and Cys-369 are joined by a disulfide bond. Catalysis depends on Asp-276, which acts as the Proton donor. Residues 389–409 (IIVAIAILLLIALILMTYFVI) form a helical membrane-spanning segment. Over 410 to 426 (RYKNRSIVNIKKLSLEN) the chain is Cytoplasmic.

The protein belongs to the histidine acid phosphatase family.

Its subcellular location is the membrane. The catalysed reaction is a phosphate monoester + H2O = an alcohol + phosphate. The chain is Putative acid phosphatase 1 from Caenorhabditis elegans.